Consider the following 150-residue polypeptide: Protein SprT-like (150 aa).

One can recognise a SprT-like domain in the interval 11–149 (ELVDKLSLTY…CGKCRGSLKE (139 aa)). A Zn(2+)-binding site is contributed by histidine 70. Glutamate 71 is an active-site residue. Histidine 74 lines the Zn(2+) pocket.

The protein belongs to the SprT family. Zn(2+) is required as a cofactor.

The protein localises to the cytoplasm. This chain is Protein SprT-like, found in Oceanobacillus iheyensis (strain DSM 14371 / CIP 107618 / JCM 11309 / KCTC 3954 / HTE831).